The sequence spans 98 residues: NADH-ubiquinone oxidoreductase chain 4L (98 aa).

The next 3 helical transmembrane spans lie at 1 to 21 (MSMVYMNIMLAFTMSLIGLLM), 29 to 49 (SLLCLEGMMLSLFVMASLMIL), and 61 to 81 (IILLVFAACEAALGLALLVMI).

Belongs to the complex I subunit 4L family. As to quaternary structure, core subunit of respiratory chain NADH dehydrogenase (Complex I) which is composed of 45 different subunits.

Its subcellular location is the mitochondrion inner membrane. The catalysed reaction is a ubiquinone + NADH + 5 H(+)(in) = a ubiquinol + NAD(+) + 4 H(+)(out). Functionally, core subunit of the mitochondrial membrane respiratory chain NADH dehydrogenase (Complex I) which catalyzes electron transfer from NADH through the respiratory chain, using ubiquinone as an electron acceptor. Part of the enzyme membrane arm which is embedded in the lipid bilayer and involved in proton translocation. The chain is NADH-ubiquinone oxidoreductase chain 4L (MT-ND4L) from Vicugna pacos (Alpaca).